Reading from the N-terminus, the 282-residue chain is MALVLDGRALAKKIEADLLVRVEALKAKSGRTPILATILVGDDGASATYVRMKGNACRRVGMDSLKIELSQETTTEQLLAEIEKLNANPDVHGILLQHPVPAQIDERACFDAISLAKDVDGVTCLGYGRMAMGEAAYGSATPAGIMTILKENNIEIAGKHAVVVGRSAILGKPMAAMLLEANATVTICHSRTQNLAEFVKQADIIVGAVGKAELIQKDWIKPGAVVVDAGFHPRDGGGVGDIQLQGIEDVASAYTPVPGGVGPMTITTLIRQTVEAAEKALA.

NADP(+) contacts are provided by residues 165–167 and S190; that span reads GRS.

Belongs to the tetrahydrofolate dehydrogenase/cyclohydrolase family. As to quaternary structure, homodimer.

The enzyme catalyses (6R)-5,10-methylene-5,6,7,8-tetrahydrofolate + NADP(+) = (6R)-5,10-methenyltetrahydrofolate + NADPH. It carries out the reaction (6R)-5,10-methenyltetrahydrofolate + H2O = (6R)-10-formyltetrahydrofolate + H(+). Its pathway is one-carbon metabolism; tetrahydrofolate interconversion. Functionally, catalyzes the oxidation of 5,10-methylenetetrahydrofolate to 5,10-methenyltetrahydrofolate and then the hydrolysis of 5,10-methenyltetrahydrofolate to 10-formyltetrahydrofolate. The protein is Bifunctional protein FolD 2 of Acinetobacter baylyi (strain ATCC 33305 / BD413 / ADP1).